A 265-amino-acid polypeptide reads, in one-letter code: Hydroxyethylthiazole kinase (265 aa).

Met-43 contributes to the substrate binding site. Residues Lys-118 and Thr-165 each coordinate ATP. Residue Gly-192 coordinates substrate.

The protein belongs to the Thz kinase family. Mg(2+) is required as a cofactor.

It catalyses the reaction 5-(2-hydroxyethyl)-4-methylthiazole + ATP = 4-methyl-5-(2-phosphooxyethyl)-thiazole + ADP + H(+). It functions in the pathway cofactor biosynthesis; thiamine diphosphate biosynthesis; 4-methyl-5-(2-phosphoethyl)-thiazole from 5-(2-hydroxyethyl)-4-methylthiazole: step 1/1. In terms of biological role, catalyzes the phosphorylation of the hydroxyl group of 4-methyl-5-beta-hydroxyethylthiazole (THZ). This chain is Hydroxyethylthiazole kinase, found in Pyrococcus abyssi (strain GE5 / Orsay).